A 261-amino-acid polypeptide reads, in one-letter code: tRNA pseudouridine synthase A (261 aa).

Aspartate 51 (nucleophile) is an active-site residue. Tyrosine 109 lines the substrate pocket.

This sequence belongs to the tRNA pseudouridine synthase TruA family. As to quaternary structure, homodimer.

It carries out the reaction uridine(38/39/40) in tRNA = pseudouridine(38/39/40) in tRNA. Functionally, formation of pseudouridine at positions 38, 39 and 40 in the anticodon stem and loop of transfer RNAs. This is tRNA pseudouridine synthase A from Shewanella halifaxensis (strain HAW-EB4).